The following is a 184-amino-acid chain: UPF0149 protein PSEEN5316 (184 aa).

Belongs to the UPF0149 family.

In Pseudomonas entomophila (strain L48), this protein is UPF0149 protein PSEEN5316.